Reading from the N-terminus, the 456-residue chain is Outer membrane protein assembly factor BamB (456 aa).

A signal peptide spans 1 to 19 (MKKLLFITAPLLLSVLTAS). Cys-20 carries N-palmitoyl cysteine lipidation. The S-diacylglycerol cysteine moiety is linked to residue Cys-20.

This sequence belongs to the BamB family. In terms of assembly, part of the Bam complex.

The protein localises to the cell outer membrane. Part of the outer membrane protein assembly complex, which is involved in assembly and insertion of beta-barrel proteins into the outer membrane. The protein is Outer membrane protein assembly factor BamB of Francisella tularensis subsp. tularensis (strain SCHU S4 / Schu 4).